The chain runs to 165 residues: Protein C2-DOMAIN ABA-RELATED 8 (165 aa).

M1 carries the post-translational modification N-acetylmethionine. A C2 domain is found at 1 to 106; it reads MENLVGLLRI…QGTDIQELTN (106 aa). Residues R21, D22, D27, D73, K74, D75, and D81 each coordinate Ca(2+).

Belongs to the plant CAR protein family. Binds to PYR/PYL/RCAR abscisic acid intracellular receptors in an ABA-independent manner, both at the plasma membrane and in the nucleus.

It localises to the cell membrane. It is found in the nucleus. Stimulates the GTPase/ATPase activities of Obg-like ATPases. Mediates the transient calcium-dependent interaction of PYR/PYL/RCAR abscisic acid (ABA) receptors with the plasma membrane and thus regulates ABA sensitivity. The chain is Protein C2-DOMAIN ABA-RELATED 8 from Arabidopsis thaliana (Mouse-ear cress).